A 451-amino-acid polypeptide reads, in one-letter code: Cyclin-dependent kinase 14 (451 aa).

Residues S60 and S77 each carry the phosphoserine modification. The interval 84–114 is disordered; sequence NFKTSSTGKESPKVRRHSSPSSPTSPKFGKA. S116 is subject to Phosphoserine. One can recognise a Protein kinase domain in the interval 117–401; the sequence is YEKLEKLGEG…AQAALSHEYF (285 aa). ATP-binding positions include 123-131 and K146; that span reads LGEGSYATV. Catalysis depends on D238, which acts as the Proton acceptor.

The protein belongs to the protein kinase superfamily. CMGC Ser/Thr protein kinase family. CDC2/CDKX subfamily. As to quaternary structure, found in a complex with LRP6, CCNY and CAPRIN2 during G2/M stage; CAPRIN2 functions as a scaffold for the complex by binding to CCNY via its N terminus and to CDK14 via its C terminus. Interacts with CCNY; CCNY mediates its recruitment to the plasma membrane and promotes phosphorylation of LRP6. Interacts with CCDN3 and CDKN1A. Interacts with SEPT8. Interacts with 14-3-3 proteina YWHAB, YWHAE, YWHAH and YWHAQ.

The protein localises to the cell membrane. It is found in the cytoplasm. It localises to the nucleus. The catalysed reaction is L-seryl-[protein] + ATP = O-phospho-L-seryl-[protein] + ADP + H(+). It catalyses the reaction L-threonyl-[protein] + ATP = O-phospho-L-threonyl-[protein] + ADP + H(+). Its activity is regulated as follows. Serine/threonine-protein kinase activity is promoted by associated cyclins CCDN3 and CCNY and repressed by CDKN1A. In terms of biological role, serine/threonine-protein kinase involved in the control of the eukaryotic cell cycle, whose activity is controlled by an associated cyclin. Acts as a cell-cycle regulator of Wnt signaling pathway during G2/M phase by mediating the phosphorylation of LRP6 at 'Ser-1490', leading to the activation of the Wnt signaling pathway. Acts as a regulator of cell cycle progression and cell proliferation via its interaction with CCDN3. Phosphorylates RB1 in vitro, however the relevance of such result remains to be confirmed in vivo. May also play a role in meiosis, neuron differentiation and may indirectly act as a negative regulator of insulin-responsive glucose transport. This is Cyclin-dependent kinase 14 (CDK14) from Plecturocebus moloch (Dusky titi monkey).